We begin with the raw amino-acid sequence, 397 residues long: Alpha-2B adrenergic receptor (397 aa).

A helical membrane pass occupies residues 1–25; that stretch reads AIAAIIIFLILFTIFGNALVILAVL. At 26 to 36 the chain is on the cytoplasmic side; sequence TSRSLRAPQNL. A helical transmembrane segment spans residues 37–62; that stretch reads FLVSLAAADILVATLIIPFSLANELL. Residues 63-72 are Extracellular-facing; that stretch reads GYWYFRRMWC. The cysteines at positions 72 and 151 are disulfide-linked. A helical membrane pass occupies residues 73 to 95; it reads KVYLALDVLFCTSSIVHLCAISL. At 96-117 the chain is on the cytoplasmic side; that stretch reads DRYWAVSRALEYNSKRTPRRIK. A helical transmembrane segment spans residues 118–140; the sequence is CIILMVWLIAAVISLPSLVYKGD. Residues 141-156 are Extracellular-facing; the sequence is QGPQPSGAPQCNLNQE. A helical transmembrane segment spans residues 157-180; sequence TWYILASSIGSFFAPCLIMILVYL. Residues 181–361 are Cytoplasmic-facing; that stretch reads RIYLIAKRSH…LSREKRFTFV (181 aa). Disordered stretches follow at residues 193–212 and 230–319; these read GPRA…RQVP and AAGE…LQQP. A compositionally biased stretch (acidic residues) spans 280-300; the sequence is SLEEEAEEEEEGEEEREEECE. A compositionally biased stretch (low complexity) spans 301-319; sequence PQALPASPASACSPPLQQP. Residues 362-385 form a helical membrane-spanning segment; sequence LAVVIGVFVLCWFPFFFSYSLGAI. The Extracellular segment spans residues 386–394; it reads CPQQCKVPH. Residues 395–397 form a helical membrane-spanning segment; sequence DLF.

It belongs to the G-protein coupled receptor 1 family. Adrenergic receptor subfamily. ADRA2B sub-subfamily. Interacts with RAB26. Interacts with PPP1R9B.

Its subcellular location is the cell membrane. In terms of biological role, alpha-2 adrenergic receptors mediate the catecholamine-induced inhibition of adenylate cyclase through the action of G proteins. The polypeptide is Alpha-2B adrenergic receptor (ADRA2B) (Talpa europaea (European mole)).